Here is a 459-residue protein sequence, read N- to C-terminus: Anthocyanidin 3-O-glucoside 2''-O-glucosyltransferase (459 aa).

Histidine 20 acts as the Proton acceptor in catalysis. Histidine 20 contributes to the an anthocyanidin binding site. Aspartate 117 acts as the Charge relay in catalysis. Positions 138, 335, 337, 352, 355, 357, and 360 each coordinate UDP-alpha-D-glucose. Position 375 (glycine 375) interacts with an anthocyanidin. 2 residues coordinate UDP-alpha-D-glucose: aspartate 376 and glutamine 377.

It belongs to the UDP-glycosyltransferase family.

It catalyses the reaction an anthocyanidin 3-O-beta-D-glucoside + UDP-alpha-D-glucose = an anthocyanidin 3-O-sophoroside + UDP + 2 H(+). It participates in pigment biosynthesis; anthocyanin biosynthesis. Its function is as follows. Glycosyltransferase that mediates the glucosylation of anthocyanidin 3-O-glucosides to yield anthocyanidin 3-O-sophorosides. 3-O-sophoroside derivatives are required for the color of flowers. This Ipomoea purpurea (Common morning glory) protein is Anthocyanidin 3-O-glucoside 2''-O-glucosyltransferase (3GGT).